The primary structure comprises 88 residues: Small ribosomal subunit protein uS15 (88 aa).

It belongs to the universal ribosomal protein uS15 family. Part of the 30S ribosomal subunit. Forms a bridge to the 50S subunit in the 70S ribosome, contacting the 23S rRNA.

Its function is as follows. One of the primary rRNA binding proteins, it binds directly to 16S rRNA where it helps nucleate assembly of the platform of the 30S subunit by binding and bridging several RNA helices of the 16S rRNA. In terms of biological role, forms an intersubunit bridge (bridge B4) with the 23S rRNA of the 50S subunit in the ribosome. In Francisella tularensis subsp. tularensis (strain FSC 198), this protein is Small ribosomal subunit protein uS15.